Here is a 138-residue protein sequence, read N- to C-terminus: Acidic phospholipase A2 2 (138 aa).

Residues 1 to 16 (MRTLWIVAVWLTGVEG) form the signal peptide. 7 disulfides stabilise this stretch: Cys-42-Cys-131, Cys-44-Cys-60, Cys-59-Cys-111, Cys-65-Cys-138, Cys-66-Cys-104, Cys-73-Cys-97, and Cys-91-Cys-102. Positions 43, 45, and 47 each coordinate Ca(2+). His-63 is an active-site residue. Position 64 (Asp-64) interacts with Ca(2+). Asp-105 is a catalytic residue.

In terms of assembly, monomer. Ca(2+) serves as cofactor. As to expression, expressed by the venom gland.

Its subcellular location is the secreted. It catalyses the reaction a 1,2-diacyl-sn-glycero-3-phosphocholine + H2O = a 1-acyl-sn-glycero-3-phosphocholine + a fatty acid + H(+). In terms of biological role, snake venom phospholipase that inhibits ADP- and collagen-induced human platelet aggregation. This inhibition is completely inhibited by abolition of catalytic activity in case of collagen as inducer and partially inhibited in case of ADP as inducer. PLA2 catalyzes the calcium-dependent hydrolysis of the 2-acyl groups in 3-sn-phosphoglycerides. The polypeptide is Acidic phospholipase A2 2 (Macrovipera lebetinus (Levantine viper)).